Here is a 158-residue protein sequence, read N- to C-terminus: Vasotocin-neurophysin VT 2 (158 aa).

The signal sequence occupies residues 1-19; that stretch reads MPHSTLLLCVIGLLAFSSA. Cysteine 20 and cysteine 25 are disulfide-bonded. Glycine 28 is modified (glycine amide). Disulfide bonds link cysteine 41/cysteine 85, cysteine 44/cysteine 58, cysteine 52/cysteine 75, cysteine 59/cysteine 65, cysteine 92/cysteine 105, cysteine 99/cysteine 117, and cysteine 106/cysteine 111.

It belongs to the vasopressin/oxytocin family. Post-translationally, seven disulfide bonds are present in neurophysin.

Its subcellular location is the secreted. Vasotocin is an antidiuretic hormone. This chain is Vasotocin-neurophysin VT 2, found in Oncorhynchus keta (Chum salmon).